The chain runs to 97 residues: Matrix protein 2 (97 aa).

Residues 1 to 22 (MSLLTEVETPTRNGWECKCSDS) are Virion surface-facing. The helical; Signal-anchor for type III membrane protein transmembrane segment at 23 to 43 (SDPLVIAASIIGILHLILWIL) threads the bilayer. At 44–97 (DRLFFKCIYRRLKYGLKRGPSTEGVPESMREEYRQEQQSAVDVDDGHFVNIELE) the chain is on the intravirion side. The S-palmitoyl cysteine; by host moiety is linked to residue C50. The interval 60-83 (KRGPSTEGVPESMREEYRQEQQSA) is disordered. Phosphoserine; by host occurs at positions 64 and 82.

The protein belongs to the influenza viruses matrix protein M2 family. As to quaternary structure, homotetramer; composed of two disulfide-linked dimers held together by non-covalent interactions. May interact with matrix protein 1.

Its subcellular location is the virion membrane. It localises to the host apical cell membrane. With respect to regulation, the M2 protein from most influenza A strains is inhibited by amantadine and rimantadine, resulting in viral uncoating incapacity. Emergence of amantadine-resistant variants is usually rapid. Functionally, forms a proton-selective ion channel that is necessary for the efficient release of the viral genome during virus entry. After attaching to the cell surface, the virion enters the cell by endocytosis. Acidification of the endosome triggers M2 ion channel activity. The influx of protons into virion interior is believed to disrupt interactions between the viral ribonucleoprotein (RNP), matrix protein 1 (M1), and lipid bilayers, thereby freeing the viral genome from interaction with viral proteins and enabling RNA segments to migrate to the host cell nucleus, where influenza virus RNA transcription and replication occur. Also plays a role in viral proteins secretory pathway. Elevates the intravesicular pH of normally acidic compartments, such as trans-Golgi network, preventing newly formed hemagglutinin from premature switching to the fusion-active conformation. This is Matrix protein 2 from Influenza A virus (strain A/Turkey/Oregon/1971 H7N3).